The chain runs to 110 residues: Large ribosomal subunit protein uL22 (110 aa).

It belongs to the universal ribosomal protein uL22 family. As to quaternary structure, part of the 50S ribosomal subunit.

Functionally, this protein binds specifically to 23S rRNA; its binding is stimulated by other ribosomal proteins, e.g. L4, L17, and L20. It is important during the early stages of 50S assembly. It makes multiple contacts with different domains of the 23S rRNA in the assembled 50S subunit and ribosome. In terms of biological role, the globular domain of the protein is located near the polypeptide exit tunnel on the outside of the subunit, while an extended beta-hairpin is found that lines the wall of the exit tunnel in the center of the 70S ribosome. The sequence is that of Large ribosomal subunit protein uL22 from Dichelobacter nodosus (strain VCS1703A).